Consider the following 113-residue polypeptide: Regulator of rDNA transcription protein 7 (113 aa).

The next 2 helical transmembrane spans lie at 13–35 (FLPI…LFYN) and 70–92 (FLLG…LLFL).

It localises to the membrane. Functionally, identified in a screen for mutants with decreased levels of rDNA transcription. The sequence is that of Regulator of rDNA transcription protein 7 (RRT7) from Saccharomyces cerevisiae (strain ATCC 204508 / S288c) (Baker's yeast).